The following is a 480-amino-acid chain: ATP synthase subunit beta (480 aa).

Position 152 to 159 (152 to 159 (GGAGVGKT)) interacts with ATP.

It belongs to the ATPase alpha/beta chains family. F-type ATPases have 2 components, CF(1) - the catalytic core - and CF(0) - the membrane proton channel. CF(1) has five subunits: alpha(3), beta(3), gamma(1), delta(1), epsilon(1). CF(0) has three main subunits: a(1), b(2) and c(9-12). The alpha and beta chains form an alternating ring which encloses part of the gamma chain. CF(1) is attached to CF(0) by a central stalk formed by the gamma and epsilon chains, while a peripheral stalk is formed by the delta and b chains.

Its subcellular location is the cell membrane. The catalysed reaction is ATP + H2O + 4 H(+)(in) = ADP + phosphate + 5 H(+)(out). In terms of biological role, produces ATP from ADP in the presence of a proton gradient across the membrane. The catalytic sites are hosted primarily by the beta subunits. The sequence is that of ATP synthase subunit beta from Wolbachia sp. subsp. Brugia malayi (strain TRS).